Here is a 118-residue protein sequence, read N- to C-terminus: Ribonuclease P protein component (118 aa).

This sequence belongs to the RnpA family. Consists of a catalytic RNA component (M1 or rnpB) and a protein subunit.

It carries out the reaction Endonucleolytic cleavage of RNA, removing 5'-extranucleotides from tRNA precursor.. In terms of biological role, RNaseP catalyzes the removal of the 5'-leader sequence from pre-tRNA to produce the mature 5'-terminus. It can also cleave other RNA substrates such as 4.5S RNA. The protein component plays an auxiliary but essential role in vivo by binding to the 5'-leader sequence and broadening the substrate specificity of the ribozyme. This chain is Ribonuclease P protein component, found in Vibrio parahaemolyticus serotype O3:K6 (strain RIMD 2210633).